The chain runs to 330 residues: MNVYYEQDADLGYLQGKNIAVLGYGSQGHAHALNLKESGLNVCVGLRPESASCAKAREAGLEVNTVAEATKWADIVMVLLPDQNQKAVYDAEIAPNLVAGNTLAFGHGFNIHYKQIIPAESINVIMIAPKSPGHLVRRTFTEGNGVPCLIAVHQDATGEAKQQALAWAKALGGTKAGVIETSIKNETETDLFGEQAVLCGGSAELIKAGFETLVEAGYPEELAYFECMHELKLIVDLYYEGGLSRMNYSVSDTAEYGGMTRGPRLITPAVKAEMKKILEEVQDGRFAKEFIDECNGGYKNLNKLREENSGHAIEKVGAKLRDMMSWLIKK.

Residues 1–181 (MNVYYEQDAD…GGTKAGVIET (181 aa)) form the KARI N-terminal Rossmann domain. NADP(+) is bound by residues 24 to 27 (YGSQ), arginine 47, serine 50, serine 52, and 82 to 85 (DQNQ). Histidine 107 is a catalytic residue. Glycine 133 is an NADP(+) binding site. In terms of domain architecture, KARI C-terminal knotted spans 182–327 (SIKNETETDL…AKLRDMMSWL (146 aa)). Aspartate 190, glutamate 194, glutamate 226, and glutamate 230 together coordinate Mg(2+). Position 251 (serine 251) interacts with substrate.

The protein belongs to the ketol-acid reductoisomerase family. Mg(2+) serves as cofactor.

The catalysed reaction is (2R)-2,3-dihydroxy-3-methylbutanoate + NADP(+) = (2S)-2-acetolactate + NADPH + H(+). It catalyses the reaction (2R,3R)-2,3-dihydroxy-3-methylpentanoate + NADP(+) = (S)-2-ethyl-2-hydroxy-3-oxobutanoate + NADPH + H(+). The protein operates within amino-acid biosynthesis; L-isoleucine biosynthesis; L-isoleucine from 2-oxobutanoate: step 2/4. It participates in amino-acid biosynthesis; L-valine biosynthesis; L-valine from pyruvate: step 2/4. Its function is as follows. Involved in the biosynthesis of branched-chain amino acids (BCAA). Catalyzes an alkyl-migration followed by a ketol-acid reduction of (S)-2-acetolactate (S2AL) to yield (R)-2,3-dihydroxy-isovalerate. In the isomerase reaction, S2AL is rearranged via a Mg-dependent methyl migration to produce 3-hydroxy-3-methyl-2-ketobutyrate (HMKB). In the reductase reaction, this 2-ketoacid undergoes a metal-dependent reduction by NADPH to yield (R)-2,3-dihydroxy-isovalerate. The sequence is that of Ketol-acid reductoisomerase (NADP(+)) from Pelodictyon phaeoclathratiforme (strain DSM 5477 / BU-1).